A 358-amino-acid chain; its full sequence is Photosystem II protein D1 2 (358 aa).

3 helical membrane-spanning segments follow: residues 28–45 (YVGW…AATI), 117–132 (HFLI…QWEL), and 141–155 (WICV…AAMA). H117 serves as a coordination point for chlorophyll a. Residue Y125 participates in pheophytin a binding. [CaMn4O5] cluster is bound by residues D169 and E188. Residues 196 to 217 (FHMLGVAGVFGGSLFSAMHGSL) form a helical membrane-spanning segment. H197 is a chlorophyll a binding site. A quinone contacts are provided by residues H214 and 263–264 (SF). H214 is a Fe cation binding site. H271 provides a ligand contact to Fe cation. Residues 273–287 (FLGAWPVVGIWFTSM) form a helical membrane-spanning segment. The [CaMn4O5] cluster site is built by H331, E332, D341, and A343. Positions 344 to 358 (AAESTPVALQAPAIG) are excised as a propeptide.

It belongs to the reaction center PufL/M/PsbA/D family. As to quaternary structure, PSII is composed of 1 copy each of membrane proteins PsbA, PsbB, PsbC, PsbD, PsbE, PsbF, PsbH, PsbI, PsbJ, PsbK, PsbL, PsbM, PsbT, PsbX, PsbY, PsbZ, Psb30/Ycf12, peripheral proteins PsbO, CyanoQ (PsbQ), PsbU, PsbV and a large number of cofactors. It forms dimeric complexes. The cofactor is The D1/D2 heterodimer binds P680, chlorophylls that are the primary electron donor of PSII, and subsequent electron acceptors. It shares a non-heme iron and each subunit binds pheophytin, quinone, additional chlorophylls, carotenoids and lipids. D1 provides most of the ligands for the Mn4-Ca-O5 cluster of the oxygen-evolving complex (OEC). There is also a Cl(-1) ion associated with D1 and D2, which is required for oxygen evolution. The PSII complex binds additional chlorophylls, carotenoids and specific lipids.. Tyr-160 forms a radical intermediate that is referred to as redox-active TyrZ, YZ or Y-Z. In terms of processing, C-terminally processed by CtpA; processing is essential to allow assembly of the oxygen-evolving complex and thus photosynthetic growth.

The protein localises to the cellular thylakoid membrane. The catalysed reaction is 2 a plastoquinone + 4 hnu + 2 H2O = 2 a plastoquinol + O2. Its function is as follows. Photosystem II (PSII) is a light-driven water:plastoquinone oxidoreductase that uses light energy to abstract electrons from H(2)O, generating O(2) and a proton gradient subsequently used for ATP formation. It consists of a core antenna complex that captures photons, and an electron transfer chain that converts photonic excitation into a charge separation. The D1/D2 (PsbA/PsbD) reaction center heterodimer binds P680, the primary electron donor of PSII as well as several subsequent electron acceptors. The protein is Photosystem II protein D1 2 of Synechococcus sp. (strain CC9605).